The primary structure comprises 111 residues: Large ribosomal subunit protein P2 (111 aa).

The disordered stretch occupies residues 81–111; sequence AAGGAAAPAAEEKKEEEKEESDEDMGFGLFD. Position 101 is a phosphoserine (S101).

Belongs to the eukaryotic ribosomal protein P1/P2 family. As to quaternary structure, P1 and P2 exist as dimers at the large ribosomal subunit.

Functionally, plays an important role in the elongation step of protein synthesis. This chain is Large ribosomal subunit protein P2, found in Aspergillus fumigatus (strain ATCC MYA-4609 / CBS 101355 / FGSC A1100 / Af293) (Neosartorya fumigata).